Here is a 309-residue protein sequence, read N- to C-terminus: Bombesin receptor-activated protein C6orf89 homolog (309 aa).

Topologically, residues 1–59 (MGSSLSEPCIYDKLSESIDILRQSGYRYGMSEREIEKFIKQVLETNEPRREPPQFPILR) are cytoplasmic. The chain crosses the membrane as a helical span at residues 60–80 (ATVKFVVAVGVVLMAVLVFTY). Topologically, residues 81-309 (PQSPVLMGSV…QDVQCDSAVL (229 aa)) are extracellular.

In terms of assembly, homodimer.

The protein localises to the golgi apparatus membrane. Its subcellular location is the cytoplasm. In terms of biological role, exhibits histone deacetylase (HDAC) enhancer properties. May play a role in progression through the cell cycle. This Danio rerio (Zebrafish) protein is Bombesin receptor-activated protein C6orf89 homolog.